The chain runs to 120 residues: Large ribosomal subunit protein uL22 (120 aa).

The protein belongs to the universal ribosomal protein uL22 family. In terms of assembly, part of the 50S ribosomal subunit.

This protein binds specifically to 23S rRNA; its binding is stimulated by other ribosomal proteins, e.g. L4, L17, and L20. It is important during the early stages of 50S assembly. It makes multiple contacts with different domains of the 23S rRNA in the assembled 50S subunit and ribosome. Functionally, the globular domain of the protein is located near the polypeptide exit tunnel on the outside of the subunit, while an extended beta-hairpin is found that lines the wall of the exit tunnel in the center of the 70S ribosome. In Corynebacterium aurimucosum (strain ATCC 700975 / DSM 44827 / CIP 107346 / CN-1) (Corynebacterium nigricans), this protein is Large ribosomal subunit protein uL22.